The primary structure comprises 385 residues: MLSLFFNFLTSCLWPSSSTTSHTYSDSKGKQDGLLWYKDSAHHLFGDFSMAVVQANNLLEDQSQVESGPLTTLSSSGPYGTFVGVYDGHGGPETSRFVNDHLFHHLKRFAAEQDSMSVDVIRKAYEATEEGFLGVVAKQWAVKPHIAAVGSCCLIGVVCDGKLYVANVGDSRAVLGKVIKATGEVNALQLSAEHNVSIESVRQEMHSLHPDDSHIVVLKHNVWRVKGIIQVSRSIGDVYLKKSEFNKEPLYTKYRLREPMKRPILSWEPSITVHDLQPDDQFLIFASDGLWEQLSNQEAVEIVQNHPRNGIARRLVKAALQEAAKKREMRYSDLNKIERGVRRHFHDDITVVVLFLDTNLLSRASSLKTPSVSIRGGGITLPKKL.

An N-terminal signal peptide occupies residues 1–18 (MLSLFFNFLTSCLWPSSS). Residues 47–356 (DFSMAVVQAN…DDITVVVLFL (310 aa)) form the PPM-type phosphatase domain. Ser-76 is subject to Phosphoserine. Mn(2+) is bound by residues Asp-87, Gly-88, Asp-288, and Asp-347.

This sequence belongs to the PP2C family. It depends on Mg(2+) as a cofactor. Mn(2+) serves as cofactor.

The enzyme catalyses O-phospho-L-seryl-[protein] + H2O = L-seryl-[protein] + phosphate. The catalysed reaction is O-phospho-L-threonyl-[protein] + H2O = L-threonyl-[protein] + phosphate. May dephosphorylate and repress plasma membrane H(+)-ATPases (PM H(+)-ATPases, e.g. AHA1 and AHA2), thus influencing negatively plant growth and fitness. This is Probable protein phosphatase 2C 79 from Arabidopsis thaliana (Mouse-ear cress).